Here is a 417-residue protein sequence, read N- to C-terminus: Probable glucuronosyltransferase GUT1 (417 aa).

Residues 1 to 15 are Cytoplasmic-facing; it reads MGTRRRSARARARPP. The helical; Signal-anchor for type II membrane protein transmembrane segment at 16 to 36 threads the bilayer; the sequence is LAMPLAVLLLFACSSGVAAAA. At 37 to 417 the chain is on the lumenal side; sequence AQGIERIKDD…EGTREDLKPW (381 aa). N-linked (GlcNAc...) asparagine glycosylation is found at asparagine 144 and asparagine 405.

This sequence belongs to the glycosyltransferase 47 family.

It localises to the golgi apparatus membrane. Functionally, involved in the synthesis of glucuronoxylan hemicellulose in secondary cell walls. In Oryza sativa subsp. japonica (Rice), this protein is Probable glucuronosyltransferase GUT1 (GUT1).